A 346-amino-acid chain; its full sequence is Serine/threonine-protein phosphatase PP1(5.9) (346 aa).

D102, H104, D130, and N162 together coordinate Mn(2+). H163 acts as the Proton donor in catalysis. Residues H211 and H287 each contribute to the Mn(2+) site.

The protein belongs to the PPP phosphatase family. PP-1 subfamily. Mn(2+) is required as a cofactor.

The enzyme catalyses O-phospho-L-seryl-[protein] + H2O = L-seryl-[protein] + phosphate. It carries out the reaction O-phospho-L-threonyl-[protein] + H2O = L-threonyl-[protein] + phosphate. The protein is Serine/threonine-protein phosphatase PP1(5.9) of Trypanosoma brucei brucei.